The primary structure comprises 427 residues: Serine--tRNA ligase (427 aa).

236–238 (TAE) lines the L-serine pocket. 267–269 (RRE) provides a ligand contact to ATP. L-serine is bound at residue glutamate 290. Residue 354-357 (EISS) coordinates ATP. Serine 390 is a binding site for L-serine.

Belongs to the class-II aminoacyl-tRNA synthetase family. Type-1 seryl-tRNA synthetase subfamily. Homodimer. The tRNA molecule binds across the dimer.

It is found in the cytoplasm. The enzyme catalyses tRNA(Ser) + L-serine + ATP = L-seryl-tRNA(Ser) + AMP + diphosphate + H(+). It carries out the reaction tRNA(Sec) + L-serine + ATP = L-seryl-tRNA(Sec) + AMP + diphosphate + H(+). Its pathway is aminoacyl-tRNA biosynthesis; selenocysteinyl-tRNA(Sec) biosynthesis; L-seryl-tRNA(Sec) from L-serine and tRNA(Sec): step 1/1. Its function is as follows. Catalyzes the attachment of serine to tRNA(Ser). Is also able to aminoacylate tRNA(Sec) with serine, to form the misacylated tRNA L-seryl-tRNA(Sec), which will be further converted into selenocysteinyl-tRNA(Sec). The polypeptide is Serine--tRNA ligase (Picosynechococcus sp. (strain ATCC 27264 / PCC 7002 / PR-6) (Agmenellum quadruplicatum)).